Consider the following 209-residue polypeptide: Small ribosomal subunit protein uS4 (209 aa).

In terms of domain architecture, S4 RNA-binding spans 98-161 (ARLDNVVYRM…RDLEVIKKAV (64 aa)).

This sequence belongs to the universal ribosomal protein uS4 family. In terms of assembly, part of the 30S ribosomal subunit. Contacts protein S5. The interaction surface between S4 and S5 is involved in control of translational fidelity.

Functionally, one of the primary rRNA binding proteins, it binds directly to 16S rRNA where it nucleates assembly of the body of the 30S subunit. Its function is as follows. With S5 and S12 plays an important role in translational accuracy. In Thermotoga petrophila (strain ATCC BAA-488 / DSM 13995 / JCM 10881 / RKU-1), this protein is Small ribosomal subunit protein uS4.